The primary structure comprises 545 residues: Glucose-6-phosphate isomerase (545 aa).

Glutamate 351 functions as the Proton donor in the catalytic mechanism. Active-site residues include histidine 382 and lysine 510.

Belongs to the GPI family.

It localises to the cytoplasm. It carries out the reaction alpha-D-glucose 6-phosphate = beta-D-fructose 6-phosphate. It functions in the pathway carbohydrate biosynthesis; gluconeogenesis. Its pathway is carbohydrate degradation; glycolysis; D-glyceraldehyde 3-phosphate and glycerone phosphate from D-glucose: step 2/4. Functionally, catalyzes the reversible isomerization of glucose-6-phosphate to fructose-6-phosphate. This Helicobacter pylori (strain P12) protein is Glucose-6-phosphate isomerase.